The primary structure comprises 489 residues: UBX domain-containing protein 7 (489 aa).

Ala-2 is subject to N-acetylalanine. The UBA domain maps to 2 to 54 (AAHGGSAASSALKGLIQQFTTITGASESVGKHMLEACNNNLEMAVTMFLDGGG). The tract at residues 56–77 (AEEPSTSSASVSTVRPHTEEEV) is disordered. Residues 59-70 (PSTSSASVSTVR) are compositionally biased toward polar residues. Lys-84 is covalently cross-linked (Glycyl lysine isopeptide (Lys-Gly) (interchain with G-Cter in SUMO2)). A Glycyl lysine isopeptide (Lys-Gly) (interchain with G-Cter in ubiquitin) cross-link involves residue Lys-99. Lys-134 is covalently cross-linked (Glycyl lysine isopeptide (Lys-Gly) (interchain with G-Cter in SUMO2)). 4 positions are modified to phosphoserine: Ser-278, Ser-280, Ser-285, and Ser-288. In terms of domain architecture, UIM spans 285 to 304 (SEDSQLEAAIRASLQETHFD). Residues 300 to 309 (ETHFDSTQTK) are compositionally biased toward polar residues. Residues 300–384 (ETHFDSTQTK…PGTATNHQGL (85 aa)) are disordered. Phosphothreonine is present on Thr-306. Residues 352-366 (HKDLGHRKEENRRPL) are compositionally biased toward basic and acidic residues. The UBX domain occupies 408-485 (VNGPKAQLML…GLCPQETVFV (78 aa)).

As to quaternary structure, interacts with neddylated CUL2, ubiquitinated HIF1A, and VCP/p97.

Its subcellular location is the nucleus. Ubiquitin-binding adapter that links a subset of NEDD8-associated cullin ring ligases (CRLs) to the segregase VCP/p97, to regulate turnover of their ubiquitination substrates. The polypeptide is UBX domain-containing protein 7 (UBXN7) (Homo sapiens (Human)).